The primary structure comprises 130 residues: Protein NrdI (130 aa).

The protein belongs to the NrdI family.

Its function is as follows. Probably involved in ribonucleotide reductase function. The chain is Protein NrdI from Bacillus velezensis (strain DSM 23117 / BGSC 10A6 / LMG 26770 / FZB42) (Bacillus amyloliquefaciens subsp. plantarum).